The primary structure comprises 187 residues: Elongation factor P (187 aa).

The protein belongs to the elongation factor P family.

It localises to the cytoplasm. The protein operates within protein biosynthesis; polypeptide chain elongation. Its function is as follows. Involved in peptide bond synthesis. Stimulates efficient translation and peptide-bond synthesis on native or reconstituted 70S ribosomes in vitro. Probably functions indirectly by altering the affinity of the ribosome for aminoacyl-tRNA, thus increasing their reactivity as acceptors for peptidyl transferase. In Bifidobacterium animalis subsp. lactis (strain AD011), this protein is Elongation factor P.